The primary structure comprises 338 residues: Anthranilate phosphoribosyltransferase (338 aa).

Residues Gly78, 81 to 82, Ser86, 88 to 91, 106 to 114, and Ser118 contribute to the 5-phospho-alpha-D-ribose 1-diphosphate site; these read GD, NIST, and KHGNRSITS. An anthranilate-binding site is contributed by Gly78. Ser90 contributes to the Mg(2+) binding site. An anthranilate-binding site is contributed by Asn109. Residue Arg163 participates in anthranilate binding. Mg(2+)-binding residues include Asp222 and Glu223.

The protein belongs to the anthranilate phosphoribosyltransferase family. Homodimer. The cofactor is Mg(2+).

It catalyses the reaction N-(5-phospho-beta-D-ribosyl)anthranilate + diphosphate = 5-phospho-alpha-D-ribose 1-diphosphate + anthranilate. It participates in amino-acid biosynthesis; L-tryptophan biosynthesis; L-tryptophan from chorismate: step 2/5. Functionally, catalyzes the transfer of the phosphoribosyl group of 5-phosphorylribose-1-pyrophosphate (PRPP) to anthranilate to yield N-(5'-phosphoribosyl)-anthranilate (PRA). This is Anthranilate phosphoribosyltransferase from Staphylococcus haemolyticus (strain JCSC1435).